Reading from the N-terminus, the 113-residue chain is MNKLRKLKRDTDHRQALMRNLATSLFKHGRIMTTEAKAKDLRRVAEKLITIAKKGDLASYRRVLGYLYEEDVAYDLFQKIAPRYQGRNGGYTRIIKVGPRKGDGAMMVYIELV.

Belongs to the bacterial ribosomal protein bL17 family. In terms of assembly, part of the 50S ribosomal subunit. Contacts protein L32.

This is Large ribosomal subunit protein bL17 from Caldicellulosiruptor saccharolyticus (strain ATCC 43494 / DSM 8903 / Tp8T 6331).